Here is a 1309-residue protein sequence, read N- to C-terminus: Phospholipase A I (1309 aa).

LRR repeat units lie at residues 155 to 178, 180 to 201, 203 to 223, and 224 to 248; these read LPLL…IGKL, NLKI…LRQC, GLVE…DFRA, and MAGL…PLHQ. ARM repeat units follow at residues 315 to 356, 401 to 439, and 440 to 481; these read DEGN…SLAR, SVSQ…NLAF, and CLEN…ILGE. The PNPLA domain maps to 502-746; that stretch reads LTMDGGGMKG…VANNPTIFAI (245 aa). The short motif at 506–511 is the GXGXXG element; that stretch reads GGGMKG. The GXSXG motif lies at 538–542; sequence GTSTG. Residue Ser540 is the Nucleophile of the active site. Asp733 serves as the catalytic Proton acceptor. Positions 733–735 match the DGA/G motif; sequence DGA. The segment at 1183–1253 is disordered; the sequence is VIGPSNEPQE…EDSDHEKTNR (71 aa). Residues 1188–1208 show a composition bias toward polar residues; that stretch reads NEPQETPLITSQGSSEYNIGD. Residues 1216 to 1235 are compositionally biased toward acidic residues; sequence GEEEDEDEEVNEETEREEME.

It belongs to the patatin family.

The protein resides in the plastid. The protein localises to the chloroplast. In terms of biological role, possesses non-specific lipolytic acyl hydrolase (LAH) activity. Catalyzes the hydrolysis of the galactolipids monogalactosyldiacylglycerol (MGDG) and digalactosyldiacylglycerol (DGDG), and less efficiently the phoshpolipids phosphatidylcholine (PC), phosphatidylethanolamine (PE), phosphatidylglycerol (PG), phosphatidylserine (PS) and phosphatidylinositol (PI). Hydrolyzes phospholipids at both the sn-1 and sn-2 positions. Involved in basal jasmonic acid production and promotes resistance to the necrotrophic fungal pathogen Botrytis cinerea. The protein is Phospholipase A I (PLA1) of Arabidopsis thaliana (Mouse-ear cress).